A 303-amino-acid polypeptide reads, in one-letter code: Zinc import ATP-binding protein ZnuC (303 aa).

Residues 17 to 232 form the ABC transporter domain; it reads VSLENVGVLR…PEYVRLFGSR (216 aa). An ATP-binding site is contributed by 49–56; it reads GPNGSGKS. A disordered region spans residues 263 to 303; sequence DHCHPDDGHHAHEHGHAGHEHDHDHPDHAHPHAHEAGERHA.

It belongs to the ABC transporter superfamily. Zinc importer (TC 3.A.1.15.5) family. The complex is composed of two ATP-binding proteins (ZnuC), two transmembrane proteins (ZnuB) and a solute-binding protein (ZnuA).

It localises to the cell inner membrane. It carries out the reaction Zn(2+)(out) + ATP(in) + H2O(in) = Zn(2+)(in) + ADP(in) + phosphate(in) + H(+)(in). Its function is as follows. Part of the ABC transporter complex ZnuABC involved in zinc import. Responsible for energy coupling to the transport system. This is Zinc import ATP-binding protein ZnuC from Rhizobium johnstonii (strain DSM 114642 / LMG 32736 / 3841) (Rhizobium leguminosarum bv. viciae).